Reading from the N-terminus, the 315-residue chain is tRNA dimethylallyltransferase (315 aa).

An ATP-binding site is contributed by Gly13–Thr20. Thr15–Thr20 is a binding site for substrate. Residues Asp38–Gln41 form an interaction with substrate tRNA region.

This sequence belongs to the IPP transferase family. As to quaternary structure, monomer. Requires Mg(2+) as cofactor.

It carries out the reaction adenosine(37) in tRNA + dimethylallyl diphosphate = N(6)-dimethylallyladenosine(37) in tRNA + diphosphate. Functionally, catalyzes the transfer of a dimethylallyl group onto the adenine at position 37 in tRNAs that read codons beginning with uridine, leading to the formation of N6-(dimethylallyl)adenosine (i(6)A). The sequence is that of tRNA dimethylallyltransferase from Staphylococcus saprophyticus subsp. saprophyticus (strain ATCC 15305 / DSM 20229 / NCIMB 8711 / NCTC 7292 / S-41).